The primary structure comprises 119 residues: UPF0102 protein Sare_1228 (119 aa).

This sequence belongs to the UPF0102 family.

The sequence is that of UPF0102 protein Sare_1228 from Salinispora arenicola (strain CNS-205).